The primary structure comprises 585 residues: Arginine--tRNA ligase (585 aa).

A 'HIGH' region motif is present at residues 131–141; sequence ANPTGPMHVGH.

The protein belongs to the class-I aminoacyl-tRNA synthetase family. In terms of assembly, monomer.

The protein localises to the cytoplasm. The catalysed reaction is tRNA(Arg) + L-arginine + ATP = L-arginyl-tRNA(Arg) + AMP + diphosphate. In Chelativorans sp. (strain BNC1), this protein is Arginine--tRNA ligase.